The following is a 324-amino-acid chain: NAD(P)H-dependent D-xylose reductase xyl1 (324 aa).

Y50 (proton donor) is an active-site residue. Residue H112 participates in substrate binding. NAD(+)-binding positions include 168–169 (SN), 217–226 (SSFGPTGFME), and 273–283 (KTSRPEVMAQN).

This sequence belongs to the aldo/keto reductase family.

The catalysed reaction is an alditol + NAD(+) = an aldose + NADH + H(+). It carries out the reaction an alditol + NADP(+) = an aldose + NADPH + H(+). The enzyme catalyses xylitol + NAD(+) = D-xylose + NADH + H(+). It catalyses the reaction xylitol + NADP(+) = D-xylose + NADPH + H(+). Its pathway is carbohydrate metabolism; D-xylose degradation. It functions in the pathway carbohydrate degradation; L-arabinose degradation via L-arabinitol; D-xylulose 5-phosphate from L-arabinose (fungal route): step 1/5. Functionally, catalyzes the initial reaction in the xylose utilization pathway by reducing D-xylose into xylitol. Xylose is a major component of hemicelluloses such as xylan. Most fungi utilize D-xylose via three enzymatic reactions, xylose reductase (XR), xylitol dehydrogenase (XDH), and xylulokinase, to form xylulose 5-phosphate, which enters pentose phosphate pathway. Also major aldose reductase in pentose and D-galactose catabolism. Reduces the pentose L-arabinose and the hexose D-galactose to their respective polyols. Responsible for extracellular beta-galactosidase formation and cellulase induction during growth on lactose. The polypeptide is NAD(P)H-dependent D-xylose reductase xyl1 (xyl1) (Hypocrea jecorina (Trichoderma reesei)).